The following is a 406-amino-acid chain: Serine/threonine transporter SstT (406 aa).

The next 9 helical transmembrane spans lie at 15-35 (LVIQ…VSPS), 47-67 (FVGA…AASI), 81-101 (IIVM…VLSF), 140-160 (ALMS…GLAL), 191-211 (FGIF…ALAG), 215-235 (LLVV…PAMV), 289-309 (IPLG…TLTL), 315-335 (MGIE…AVSA), and 362-382 (IAMQ…SAET).

Belongs to the dicarboxylate/amino acid:cation symporter (DAACS) (TC 2.A.23) family.

The protein localises to the cell inner membrane. It catalyses the reaction L-serine(in) + Na(+)(in) = L-serine(out) + Na(+)(out). The enzyme catalyses L-threonine(in) + Na(+)(in) = L-threonine(out) + Na(+)(out). Involved in the import of serine and threonine into the cell, with the concomitant import of sodium (symport system). The sequence is that of Serine/threonine transporter SstT from Vibrio vulnificus (strain YJ016).